A 470-amino-acid chain; its full sequence is Homogentisate 1,2-dioxygenase (470 aa).

His356, Glu362, and His392 together coordinate Fe cation.

The protein belongs to the homogentisate dioxygenase family. It depends on Fe cation as a cofactor.

It carries out the reaction homogentisate + O2 = 4-maleylacetoacetate + H(+). Its pathway is amino-acid degradation; L-phenylalanine degradation; acetoacetate and fumarate from L-phenylalanine: step 4/6. This Oryza sativa subsp. japonica (Rice) protein is Homogentisate 1,2-dioxygenase (HGO).